A 245-amino-acid polypeptide reads, in one-letter code: 1-(5-phosphoribosyl)-5-[(5-phosphoribosylamino)methylideneamino] imidazole-4-carboxamide isomerase (245 aa).

The active-site Proton acceptor is Asp7. The active-site Proton donor is Asp129.

This sequence belongs to the HisA/HisF family.

The protein resides in the cytoplasm. The enzyme catalyses 1-(5-phospho-beta-D-ribosyl)-5-[(5-phospho-beta-D-ribosylamino)methylideneamino]imidazole-4-carboxamide = 5-[(5-phospho-1-deoxy-D-ribulos-1-ylimino)methylamino]-1-(5-phospho-beta-D-ribosyl)imidazole-4-carboxamide. It functions in the pathway amino-acid biosynthesis; L-histidine biosynthesis; L-histidine from 5-phospho-alpha-D-ribose 1-diphosphate: step 4/9. The sequence is that of 1-(5-phosphoribosyl)-5-[(5-phosphoribosylamino)methylideneamino] imidazole-4-carboxamide isomerase from Pectobacterium carotovorum subsp. carotovorum (strain PC1).